The chain runs to 351 residues: Uroporphyrinogen decarboxylase (351 aa).

Residues 25–29 (RQAGR), D74, Y151, S206, and H325 contribute to the substrate site.

This sequence belongs to the uroporphyrinogen decarboxylase family. In terms of assembly, homodimer.

It localises to the cytoplasm. The enzyme catalyses uroporphyrinogen III + 4 H(+) = coproporphyrinogen III + 4 CO2. Its pathway is porphyrin-containing compound metabolism; protoporphyrin-IX biosynthesis; coproporphyrinogen-III from 5-aminolevulinate: step 4/4. Its function is as follows. Catalyzes the decarboxylation of four acetate groups of uroporphyrinogen-III to yield coproporphyrinogen-III. The sequence is that of Uroporphyrinogen decarboxylase from Prosthecochloris aestuarii (strain DSM 271 / SK 413).